We begin with the raw amino-acid sequence, 512 residues long: 2,3-bisphosphoglycerate-independent phosphoglycerate mutase (512 aa).

Mn(2+)-binding residues include Asp12 and Ser62. Ser62 serves as the catalytic Phosphoserine intermediate. Residues His123, 153-154 (RD), Arg185, Arg191, 260-263 (RPDR), and Lys333 contribute to the substrate site. Positions 400, 404, 441, 442, and 460 each coordinate Mn(2+).

The protein belongs to the BPG-independent phosphoglycerate mutase family. In terms of assembly, monomer. Mn(2+) is required as a cofactor.

It carries out the reaction (2R)-2-phosphoglycerate = (2R)-3-phosphoglycerate. The protein operates within carbohydrate degradation; glycolysis; pyruvate from D-glyceraldehyde 3-phosphate: step 3/5. Catalyzes the interconversion of 2-phosphoglycerate and 3-phosphoglycerate. This Clostridium perfringens (strain ATCC 13124 / DSM 756 / JCM 1290 / NCIMB 6125 / NCTC 8237 / Type A) protein is 2,3-bisphosphoglycerate-independent phosphoglycerate mutase.